The sequence spans 559 residues: MKTTKLLIPTQKEVPNDAQIISHQLMIRAGLISKLASGLYSYLPMGVRVLHKVENIIRQEMNKSGAQEVFMPVVQPAELWKTSGRWDKYGTELLRFTDRHQREFCLGPTHEEVITHLAAQYLRSYKQLPMNFYQIQTKFRDEIRPRFGVMRSREFIMKDAYSFHLDQYSLQQTYDVMYQTYCNIFDRLSLDYHAVLADSGSIGGDASHEFHVLAESGEDTICFSDESNYAANIEKVSFLKQEKTCKSTLTEERVLTKKKNSIEEVAEFLNVNKSDCVKILIIKTKDGFKALALRGDHELNEIKAHNLFGNFEFAIDDEIKNLDLKKGFIGIKDLDIDLIVDYSASVLCDFVCGANEWDYHLMSVNWQGIEFVDADLRSAVEGDYSPDGKGKLIIKRGIEVGHIFQLGTKYSSAMKVNVIGESGKAITTTMGCYGIGVTRIIAASIEQNYDDKGIIFPQAIAPFQVVIVPINYNKSTRVKALSDKLYQQFIGAGIEVLLDDRKERAGIMFADSELLGIPHRMVISDTHADNGNVEYKARDKIDKMQMKFDDALSFIQFKL.

It belongs to the class-II aminoacyl-tRNA synthetase family. ProS type 1 subfamily. Homodimer.

Its subcellular location is the cytoplasm. The catalysed reaction is tRNA(Pro) + L-proline + ATP = L-prolyl-tRNA(Pro) + AMP + diphosphate. Catalyzes the attachment of proline to tRNA(Pro) in a two-step reaction: proline is first activated by ATP to form Pro-AMP and then transferred to the acceptor end of tRNA(Pro). As ProRS can inadvertently accommodate and process non-cognate amino acids such as alanine and cysteine, to avoid such errors it has two additional distinct editing activities against alanine. One activity is designated as 'pretransfer' editing and involves the tRNA(Pro)-independent hydrolysis of activated Ala-AMP. The other activity is designated 'posttransfer' editing and involves deacylation of mischarged Ala-tRNA(Pro). The misacylated Cys-tRNA(Pro) is not edited by ProRS. This chain is Proline--tRNA ligase, found in Ruthia magnifica subsp. Calyptogena magnifica.